Reading from the N-terminus, the 373-residue chain is Probable G-protein coupled receptor 45 (373 aa).

Over 1–38 (MACNSTPMGTYEHLLLNVSNTLDPGDTPLSAPLRISLA) the chain is Extracellular. The N-linked (GlcNAc...) asparagine glycan is linked to Asn17. A helical transmembrane segment spans residues 39–59 (IMMLLMIVVGFLGNTVVCIIV). Residues 60–75 (YQRPAMRSAINLLLAT) lie on the Cytoplasmic side of the membrane. Residues 76–96 (LAFSDIMLSLCCMPFTAITLI) traverse the membrane as a helical segment. At 97–109 (TVRWHFGDHFCRL) the chain is on the extracellular side. Residues 110-130 (SATLYWFFVLEGVAILLIISV) form a helical membrane-spanning segment. Over 131 to 149 (DRFLIIVQRQDKLNPRRAK) the chain is Cytoplasmic. The chain crosses the membrane as a helical span at residues 150–170 (MIIAASWVLSFCISAPSFTGW). The Extracellular portion of the chain corresponds to 171 to 198 (TFMEVPARAPQCVLGYTEFPAERAYVVT). Residues 199 to 219 (LVVAVFFAPFGVMLCSYLCIL) form a helical membrane-spanning segment. The Cytoplasmic portion of the chain corresponds to 220-269 (NTVRKNAVRVHNQSDSLDLRQLTGAGLRRLRRQQQQASLDLSFKTKAFTT). Residues 270-290 (ILILFVGFSLCWLPHSVYSLL) form a helical membrane-spanning segment. At 291 to 306 (SAFSRRFYYSASFYTT) the chain is on the extracellular side. Residues 307-327 (STCVLWLSYLKSVFNPIVYCW) form a helical membrane-spanning segment. Residues 328–373 (RIKKFREACIELLPHTFQILPKVPERIQRKIQPSTIYVCNENQSAV) lie on the Cytoplasmic side of the membrane.

This sequence belongs to the G-protein coupled receptor 1 family. In terms of tissue distribution, brain specific.

The protein localises to the cell membrane. Orphan receptor. May play a role in brain function. The chain is Probable G-protein coupled receptor 45 (Gpr45) from Mus musculus (Mouse).